A 105-amino-acid chain; its full sequence is uncharacterized protein (105 aa).

Residues A25–I47 form a helical membrane-spanning segment. The disordered stretch occupies residues G54–K89.

The protein localises to the membrane. This is an uncharacterized protein from Saccharomyces cerevisiae (strain ATCC 204508 / S288c) (Baker's yeast).